Consider the following 84-residue polypeptide: Gas vesicle protein M1 (84 aa).

An interacts with GvpL1 region spans residues 1 to 25; that stretch reads MEPTKDETHAIVEFVDVLLRDGAVI. The segment at 5 to 21 is alpha helix 1; the sequence is KDETHAIVEFVDVLLRD. Beta-strand stretches follow at residues 27–29 and 41–43; these read ADV and ISL. The Conserved in GvpJ1/2 but not GvpA motif lies at 44 to 48; sequence RAAIA. Alpha helix regions lie at residues 46–56 and 62–84; these read AIAGMTTMTEY and WDAA…RRED.

The protein belongs to the gas vesicle GvpA family. GvpF to GvpM interact with each other in vitro, and may form multi-subunit complex(es). Might interact with GvpA1.

The protein localises to the gas vesicle. Functionally, proteins GvpF to GvpM might be involved in nucleating gas vesicle formation. A minor component of the gas vesicle. Gas vesicles are hollow, gas filled proteinaceous nanostructures found in several microbial planktonic microorganisms. They allow positioning of halobacteria at the optimal depth for growth in the poorly aerated, shallow brine pools of their habitat. Its function is as follows. Expression of a 9.5 kb p-vac DNA fragment containing 2 divergently transcribed regions (gvpD-gvpE-gvpF-gvpG-gvpH-gvpI-gvpJ-gvpK-gvpL-gvpM and gvpA-gvpC-gvpN-gvpO) allows H.volcanii to produce gas vesicles. All site-directed mutagenesis is tested in H.volcanii. A minimal gas vesicle can be made in H.volcanii by gvpA1-gvpO1 plus gvpF1-gvpG1-gvpJ1-gvpK1-gvpL1-gvpM1; lack of enough GvpJ1 prevents formation. A similar region restores gas vesicle production in H.halobium without the p-vac locus, but it still has the c-vac locus. This chain is Gas vesicle protein M1 (gvpM11), found in Halobacterium salinarum (strain ATCC 700922 / JCM 11081 / NRC-1) (Halobacterium halobium).